A 240-amino-acid polypeptide reads, in one-letter code: Probable septum site-determining protein MinC (240 aa).

This sequence belongs to the MinC family. As to quaternary structure, interacts with MinD and FtsZ.

Cell division inhibitor that blocks the formation of polar Z ring septums. Rapidly oscillates between the poles of the cell to destabilize FtsZ filaments that have formed before they mature into polar Z rings. Prevents FtsZ polymerization. This chain is Probable septum site-determining protein MinC, found in Acinetobacter baumannii (strain ACICU).